A 651-amino-acid polypeptide reads, in one-letter code: Acetyl-coenzyme A synthetase (651 aa).

CoA is bound by residues Arg191–Lys194, Thr311, and Asn335. ATP is bound by residues Gly387–Pro389, Asp411–Thr416, Asp500, and Arg515. CoA is bound at residue Ser523. Residue Arg526 coordinates ATP. Mg(2+)-binding residues include Val537, His539, and Val542. Residue Arg584 coordinates CoA. Lys609 is modified (N6-acetyllysine).

This sequence belongs to the ATP-dependent AMP-binding enzyme family. Requires Mg(2+) as cofactor. In terms of processing, acetylated. Deacetylation by the SIR2-homolog deacetylase activates the enzyme.

It carries out the reaction acetate + ATP + CoA = acetyl-CoA + AMP + diphosphate. Functionally, catalyzes the conversion of acetate into acetyl-CoA (AcCoA), an essential intermediate at the junction of anabolic and catabolic pathways. AcsA undergoes a two-step reaction. In the first half reaction, AcsA combines acetate with ATP to form acetyl-adenylate (AcAMP) intermediate. In the second half reaction, it can then transfer the acetyl group from AcAMP to the sulfhydryl group of CoA, forming the product AcCoA. This is Acetyl-coenzyme A synthetase from Stutzerimonas stutzeri (strain A1501) (Pseudomonas stutzeri).